Here is a 292-residue protein sequence, read N- to C-terminus: (S)-phenoxypropionate/alpha-ketoglutarate-dioxygenase (292 aa).

Fe cation contacts are provided by His108 and Asp110. Thr135 and Trp247 together coordinate 2-oxoglutarate. His262 contributes to the Fe cation binding site. Arg273 contributes to the 2-oxoglutarate binding site.

The protein belongs to the TfdA dioxygenase family. As to quaternary structure, monomer. Fe cation serves as cofactor. Requires L-ascorbate as cofactor.

The enzyme catalyses (S)-2-(4-chloro-2-methylphenoxy)propanoate + 2-oxoglutarate + O2 = 2-methyl-4-chlorophenol + pyruvate + succinate + CO2. The catalysed reaction is (S)-(2,4-dichlorophenoxy)propanoate + 2-oxoglutarate + O2 = 2,4-dichlorophenol + pyruvate + succinate + CO2. Its pathway is xenobiotic degradation; 2-(2,4-dichlorophenoxy)propanoate degradation. Inhibited by divalent cations, most significantly by copper and nickel, and by diethylpyrocarbonate (DEPC). Its function is as follows. Involved in the degradation of the phenoxypropionate herbicides. Catalyzes the enantiospecific cleavage of the ether bond in the herbicid S-dichlorprop ((S)-2-(2,4-dichlorophenoxy)propionate)(S-2,4-DP) and S-mecoprop ((S)-2-(4-chloro-2-methylphenoxy)propionate)(S-2,4-MCPP). It can also accept (RS)-2-(4-chlorophenoxy)propionate, (RS)-2-(m-chlorophenoxy)propionate and phenoxyacetate derivatives such as 2,4-dichlorophenoxyacetate (2,4-D), however it can only accept 2-oxoglutarate as oxygen acceptor. In Delftia acidovorans (Pseudomonas acidovorans), this protein is (S)-phenoxypropionate/alpha-ketoglutarate-dioxygenase.